The primary structure comprises 125 residues: Protein ApaG (125 aa).

An ApaG domain is found at T3–N125.

The chain is Protein ApaG from Anaeromyxobacter dehalogenans (strain 2CP-C).